We begin with the raw amino-acid sequence, 387 residues long: MSRTNLPIQPAKMSDATSSKPQIFSIQDLKQAASDKMSQMYRDYYNGGAMDNITLASNEAAFDRYLLRPRVLRNVSNIDMTTTLWGTKAALPLGVSPSAMHRLAHADGEVGTSKACAARNVPMILSALSNDTLEDVSGQSSDGSTPYAIQVSPFKNRQITTNLLSRAKAAGYKAVVLTVDAPMFGRRLDDLRNGFSIPPGFSFPNLSAQTQSGSGGLGGGIPDLSFDTAATWEEKIAWMKSQTDLEIWVKGVTSPLDAQIAIEQGVDGIIISNHGGRQLDTTPATIDILREIAPIAKGKTRIAIDGGFRRGSDIFKAVALGADFVFVGRIAIWGLAYDGSNGVGLALDLLINEFKLCMGLAGCSKISDITPAHLSILNAKGVLESVY.

Residues 1-20 are disordered; it reads MSRTNLPIQPAKMSDATSSK. Residues 18–379 form the FMN hydroxy acid dehydrogenase domain; the sequence is SSKPQIFSIQ…TPAHLSILNA (362 aa). Y44 serves as a coordination point for a 2-oxocarboxylate. Positions 126, 150, and 178 each coordinate FMN. R187 contacts a 2-oxocarboxylate. An FMN-binding site is contributed by K250. Catalysis depends on H274, which acts as the Proton acceptor. Residue R277 participates in a 2-oxocarboxylate binding. FMN is bound by residues 305–309 and 328–329; these read DGGFR and GR.

It belongs to the FMN-dependent alpha-hydroxy acid dehydrogenase family. FMN serves as cofactor.

Its pathway is mycotoxin biosynthesis. Functionally, oxidase; part of the gene cluster that mediates the biosynthesis of fusaric acid, a mycotoxin with low to moderate toxicity to animals and humans, but with high phytotoxic properties. L-aspartate is suggested as fusaric acid amino acid precursor that is activated and further processed to O-acetyl-L-homoserine by cluster enzymes aspartate kinase FUB3 and homoserine O-acetyltransferase FUB5, as well as enzymes of the primary metabolism. The polyketide synthase (PKS) FUB1 generates the triketide trans-2-hexenal which is presumptively released by the hydrolase FUB4 and linked to the NRPS-bound amino acid precursor by NAD(P)-dependent dehydrogenase FUB6. FUB1, FUB4, and the non-canonical NRPS Fub8 may form an enzyme complex. Further processing of the NRPS-bound intermediate might be carried out by FUB6 and the sulfhydrylase FUB7, enabling a spontaneous electrocyclization to close the carbon backbone of fusaric acid. Dihydrofusaric acid is likely to be released via reduction by the thioester reductase (TR) domain of FUB8 whereupon the final oxidation to fusaric acid may (also) be performed by the FMN-dependent dehydrogenase FUB9. The protein is Oxidase FUB9 of Fusarium oxysporum f. sp. lycopersici (strain 4287 / CBS 123668 / FGSC 9935 / NRRL 34936) (Fusarium vascular wilt of tomato).